Consider the following 139-residue polypeptide: Protein PsiE homolog (139 aa).

The next 4 membrane-spanning stretches (helical) occupy residues 20 to 40, 60 to 80, 85 to 105, and 111 to 131; these read IVLC…LVKI, AEQA…VQYF, HFPL…LIIV, and VDTI…CLVL.

It belongs to the PsiE family.

The protein resides in the cell inner membrane. In Haemophilus influenzae (strain 86-028NP), this protein is Protein PsiE homolog.